A 52-amino-acid polypeptide reads, in one-letter code: uncharacterized protein (52 aa).

The segment at 1–52 (MVNNDAKIGRREFYDRVESVRPKSPPRERPTYTYSNSRTVDGYSNRGPRADF) is disordered. Positions 7–30 (KIGRREFYDRVESVRPKSPPRERP) are enriched in basic and acidic residues.

This is an uncharacterized protein from Dictyostelium discoideum (Social amoeba).